The sequence spans 1605 residues: Zinc finger protein jing homolog (1605 aa).

Residues 1–15 show a composition bias toward polar residues; it reads MQHQSLSVRNSSGIS. Disordered stretches follow at residues 1–28, 60–117, 359–388, 441–468, 856–877, 917–947, and 991–1213; these read MQHQ…VRSS, QWPW…QQSN, TRKV…TSDP, QQHQ…TQAQ, STTS…PPKL, TKAT…ASCT, and NDSG…TDFL. Residues 64 to 117 show a composition bias toward low complexity; sequence NTSNNTNATNSNNVQSNNNSSTATSNSSTNSNNSPAVNTPTTQNQSQPTTQQSN. Residues 991-1000 are compositionally biased toward polar residues; the sequence is NDSGIVANSS. Basic and acidic residues predominate over residues 1021–1030; it reads PQKKDEESRQ. A compositionally biased stretch (pro residues) spans 1035 to 1049; that stretch reads SPVPSPSPLSEPPVI. Composition is skewed to acidic residues over residues 1053–1090 and 1099–1110; these read SEPE…DEPH and SSEAVELPELED. Residues 1112–1126 are compositionally biased toward pro residues; the sequence is QPSPPLPCELPPPPT. Over residues 1135-1149 the composition is skewed to low complexity; it reads LSLPPSQKSPKSLLL. The span at 1165 to 1201 shows a compositional bias: polar residues; that stretch reads QESMSSDQDYSNQSPLDESSPTGSAEPSESQRSTTPV. The C2H2-type 1 zinc finger occupies 1260 to 1285; it reads GVCYWSNCDAQFDTSSKLLDHLQIQH. Residues 1293 to 1320 form a C2H2-type 2; degenerate zinc finger; it reads FACLWDGCKVHNKESCSRRWLERHVLSH. The C2H2-type 3 zinc finger occupies 1326–1350; the sequence is HKCIVAGCGMRFGSQLALEKHVNHH. Disordered stretches follow at residues 1352-1371 and 1511-1605; these read NNTD…LPKV and CSRS…SSTS. Composition is skewed to low complexity over residues 1511-1537 and 1556-1605; these read CSRS…SLIS and KQSY…SSTS.

Belongs to the AEBP2/jing C2H2-type zinc-finger family.

The protein resides in the nucleus. Its function is as follows. May functionally interact with Polycomb group (PcG) and trithorax group (trxG) proteins to repress transcription. In Aedes aegypti (Yellowfever mosquito), this protein is Zinc finger protein jing homolog.